The sequence spans 195 residues: Magnetosome membrane protein 22 (195 aa).

A compositionally biased stretch (low complexity) spans 1–28 (MAAQTAASEAPAPAAAPADSPTTAGPTP). The disordered stretch occupies residues 1-31 (MAAQTAASEAPAPAAAPADSPTTAGPTPDSV). 3 helical membrane-spanning segments follow: residues 45–65 (VLAAVAASIVPVPLFDIAAVV), 90–110 (SVIASLAGGVVGYGAGMAVAV), and 115–135 (LIPGVGWMLGMVSLPVIAGAT).

Its subcellular location is the magnetosome membrane. This is Magnetosome membrane protein 22 from Magnetospirillum gryphiswaldense (strain DSM 6361 / JCM 21280 / NBRC 15271 / MSR-1).